The primary structure comprises 84 residues: Large ribosomal subunit protein bL27 (84 aa).

Positions 1 to 21 (MAHKKGGGSTKNGRDSNPKYL) are disordered.

Belongs to the bacterial ribosomal protein bL27 family.

The polypeptide is Large ribosomal subunit protein bL27 (Chlorobium phaeovibrioides (strain DSM 265 / 1930) (Prosthecochloris vibrioformis (strain DSM 265))).